Here is a 1426-residue protein sequence, read N- to C-terminus: ABC transporter G family member 31 (1426 aa).

Asparagine 6 and asparagine 150 each carry an N-linked (GlcNAc...) asparagine glycan. In terms of domain architecture, ABC transporter 1 spans leucine 160–proline 434. An ATP-binding site is contributed by glycine 193–serine 200. Residue asparagine 219 is glycosylated (N-linked (GlcNAc...) asparagine). Threonine 276 is modified (phosphothreonine). Residues glutamate 512–phenylalanine 725 form the ABC transmembrane type-2 1 domain. Helical transmembrane passes span phenylalanine 530 to phenylalanine 550, cysteine 569 to isoleucine 589, valine 618 to leucine 638, methionine 649 to leucine 669, isoleucine 675 to isoleucine 695, and isoleucine 760 to leucine 780. The 253-residue stretch at methionine 826–asparagine 1078 folds into the ABC transporter 2 domain. The N-linked (GlcNAc...) asparagine glycan is linked to asparagine 856. Glycine 871–threonine 878 is an ATP binding site. The region spanning serine 1151–leucine 1365 is the ABC transmembrane type-2 2 domain. A run of 7 helical transmembrane segments spans residues leucine 1172–isoleucine 1192, leucine 1202–serine 1222, isoleucine 1258–phenylalanine 1278, phenylalanine 1285–methionine 1305, leucine 1315–valine 1335, valine 1342–leucine 1362, and isoleucine 1396–leucine 1416.

It belongs to the ABC transporter superfamily. ABCG family. PDR (TC 3.A.1.205) subfamily. Expressed in seedlings, stems, leaves, siliques and inflorescence. In seeds, confined to the endosperm. Highly expressed in the tapetum of anthers.

Its subcellular location is the cell membrane. The catalysed reaction is abscisate(in) + ATP + H2O = abscisate(out) + ADP + phosphate + H(+). In terms of biological role, together with ABCG25, export abscisic acid (ABA) from the endosperm to deliver it to the embryo via ABCG30 and ABCG40-mediated import to suppress radicle extension and subsequent embryonic growth. Together with ABCG9, involved in pollen coat deposition of steryl glycosides required for pollen fitness. May be a general defense protein. The chain is ABC transporter G family member 31 from Arabidopsis thaliana (Mouse-ear cress).